The sequence spans 393 residues: Epoxyqueuosine reductase (393 aa).

Catalysis depends on D154, which acts as the Proton donor. Positions 196 to 228 (LPLPVDIPVQEGCHSCVACITSCPTGAIVEPYT) constitute a 4Fe-4S ferredoxin-type domain. Residues C208, C211, C214, C218, C234, C261, C264, and C268 each coordinate [4Fe-4S] cluster.

Belongs to the QueG family. In terms of assembly, monomer. Cob(II)alamin serves as cofactor. The cofactor is [4Fe-4S] cluster.

The protein localises to the cytoplasm. The enzyme catalyses epoxyqueuosine(34) in tRNA + AH2 = queuosine(34) in tRNA + A + H2O. It functions in the pathway tRNA modification; tRNA-queuosine biosynthesis. Functionally, catalyzes the conversion of epoxyqueuosine (oQ) to queuosine (Q), which is a hypermodified base found in the wobble positions of tRNA(Asp), tRNA(Asn), tRNA(His) and tRNA(Tyr). The protein is Epoxyqueuosine reductase of Shewanella oneidensis (strain ATCC 700550 / JCM 31522 / CIP 106686 / LMG 19005 / NCIMB 14063 / MR-1).